Consider the following 97-residue polypeptide: Co-chaperonin GroES (97 aa).

It belongs to the GroES chaperonin family. As to quaternary structure, heptamer of 7 subunits arranged in a ring. Interacts with the chaperonin GroEL.

It is found in the cytoplasm. In terms of biological role, together with the chaperonin GroEL, plays an essential role in assisting protein folding. The GroEL-GroES system forms a nano-cage that allows encapsulation of the non-native substrate proteins and provides a physical environment optimized to promote and accelerate protein folding. GroES binds to the apical surface of the GroEL ring, thereby capping the opening of the GroEL channel. The protein is Co-chaperonin GroES of Blochmanniella pennsylvanica (strain BPEN).